The following is a 681-amino-acid chain: Potassium-transporting ATPase ATP-binding subunit (681 aa).

Transmembrane regions (helical) follow at residues 30-50 (LLVYVGAILATSLYFLGFFGI), 59-79 (LAIALILWFTVLFANFAEAIA), 216-236 (ILLVTLSIIFLAVSATLLPFT), and 255-275 (IALLVCLAPTTIGALLSSIGI). The 4-aspartylphosphate intermediate role is filled by Asp306. Residues Asp343, Glu347, 376–383 (FTATTRMS), and Lys394 contribute to the ATP site. Positions 517 and 521 each coordinate Mg(2+). 3 helical membrane passes run 587–607 (FAIIPVLFYGIFPQLEALNLM), 615–635 (AILSAIIYNAVIIIVLIPLSL), and 661–681 (LIAPFIAIKLIDMLLTVLGIV).

It belongs to the cation transport ATPase (P-type) (TC 3.A.3) family. Type IA subfamily. As to quaternary structure, the system is composed of three essential subunits: KdpA, KdpB and KdpC.

It is found in the cell membrane. The catalysed reaction is K(+)(out) + ATP + H2O = K(+)(in) + ADP + phosphate + H(+). Part of the high-affinity ATP-driven potassium transport (or Kdp) system, which catalyzes the hydrolysis of ATP coupled with the electrogenic transport of potassium into the cytoplasm. This subunit is responsible for energy coupling to the transport system and for the release of the potassium ions to the cytoplasm. This is Potassium-transporting ATPase ATP-binding subunit from Listeria monocytogenes serovar 1/2a (strain ATCC BAA-679 / EGD-e).